A 353-amino-acid polypeptide reads, in one-letter code: Nicotinate-nucleotide--dimethylbenzimidazole phosphoribosyltransferase (353 aa).

Residue Glu-318 is the Proton acceptor of the active site.

Belongs to the CobT family.

It carries out the reaction 5,6-dimethylbenzimidazole + nicotinate beta-D-ribonucleotide = alpha-ribazole 5'-phosphate + nicotinate + H(+). It participates in nucleoside biosynthesis; alpha-ribazole biosynthesis; alpha-ribazole from 5,6-dimethylbenzimidazole: step 1/2. Its function is as follows. Catalyzes the synthesis of alpha-ribazole-5'-phosphate from nicotinate mononucleotide (NAMN) and 5,6-dimethylbenzimidazole (DMB). The chain is Nicotinate-nucleotide--dimethylbenzimidazole phosphoribosyltransferase from Roseiflexus castenholzii (strain DSM 13941 / HLO8).